The chain runs to 325 residues: Ribosomal RNA small subunit methyltransferase H (325 aa).

Residues methionine 1 to histidine 28 form a disordered region. A compositionally biased stretch (low complexity) spans glutamate 15–alanine 24. S-adenosyl-L-methionine-binding positions include glycine 56–histidine 58, aspartate 82, tyrosine 110, aspartate 131, and glutamine 138. A disordered region spans residues threonine 303–glutamate 325. Residues arginine 314–glutamate 325 show a composition bias toward basic residues.

The protein belongs to the methyltransferase superfamily. RsmH family.

It localises to the cytoplasm. The catalysed reaction is cytidine(1402) in 16S rRNA + S-adenosyl-L-methionine = N(4)-methylcytidine(1402) in 16S rRNA + S-adenosyl-L-homocysteine + H(+). Specifically methylates the N4 position of cytidine in position 1402 (C1402) of 16S rRNA. In Rhodopirellula baltica (strain DSM 10527 / NCIMB 13988 / SH1), this protein is Ribosomal RNA small subunit methyltransferase H.